The sequence spans 407 residues: Extracellular superoxide dismutase [Cu-Zn] 3 (407 aa).

The first 19 residues, methionine 1–alanine 19, serve as a signal peptide directing secretion. Topologically, residues aspartate 20–glycine 386 are extracellular. Residues asparagine 51, asparagine 205, and asparagine 224 are each glycosylated (N-linked (GlcNAc...) asparagine). Positions 245 and 247 each coordinate Cu cation. Asparagine 256 carries an N-linked (GlcNAc...) asparagine glycan. Histidine 263 is a binding site for Cu cation. Zn(2+) is bound by residues histidine 263, histidine 271, histidine 280, and aspartate 283. Residue histidine 320 participates in Cu cation binding. Asparagine 321 and asparagine 364 each carry an N-linked (GlcNAc...) asparagine glycan. A helical membrane pass occupies residues serine 387–leucine 406. Residue leucine 407 is a topological domain, cytoplasmic.

The protein belongs to the Cu-Zn superoxide dismutase family. It depends on Cu cation as a cofactor. Zn(2+) serves as cofactor.

It localises to the cell membrane. The enzyme catalyses 2 superoxide + 2 H(+) = H2O2 + O2. Its function is as follows. Protect the extracellular space from toxic effect of reactive oxygen intermediates by converting superoxyde radicals into hydrogen peroxyde and oxygen. In Dictyostelium discoideum (Social amoeba), this protein is Extracellular superoxide dismutase [Cu-Zn] 3 (sodC).